Here is a 454-residue protein sequence, read N- to C-terminus: Inner membrane permease YgbN (454 aa).

Met1 is a topological domain (periplasmic). A helical membrane pass occupies residues Ser2–Ile22. At Lys23–Gln27 the chain is on the cytoplasmic side. The chain crosses the membrane as a helical span at residues Pro28 to Gly48. Topologically, residues Glu49–Lys52 are periplasmic. A helical membrane pass occupies residues Val53 to Ala73. Over Met74–Ala108 the chain is Cytoplasmic. A helical transmembrane segment spans residues Ala109–Ile129. The Periplasmic portion of the chain corresponds to Tyr130–Lys137. Residues Ile138 to Val158 form a helical membrane-spanning segment. At Pro159–Asp174 the chain is on the cytoplasmic side. Residues Ile175–Phe195 traverse the membrane as a helical segment. Residues Ala196–Pro235 lie on the Periplasmic side of the membrane. The chain crosses the membrane as a helical span at residues Gly236–Val256. The Cytoplasmic segment spans residues Ser257–Leu273. A helical transmembrane segment spans residues Ile274–Leu294. At Arg295–Asp305 the chain is on the periplasmic side. The helical transmembrane segment at Ile306–Val326 threads the bilayer. Over Phe327 to Ala341 the chain is Cytoplasmic. The helical transmembrane segment at Asn342–Leu362 threads the bilayer. The Periplasmic segment spans residues Arg363–Ala383. Residues Val384–Leu404 traverse the membrane as a helical segment. Residues Gly405–Thr433 lie on the Cytoplasmic side of the membrane. A helical membrane pass occupies residues Val434–Ile454.

The protein belongs to the GntP permease family.

The protein resides in the cell inner membrane. This chain is Inner membrane permease YgbN (ygbN), found in Escherichia coli (strain K12).